Reading from the N-terminus, the 629-residue chain is MHFHERFDVIVVGGGHAGTEAALAAARMGSKTLLLTHNIDTLGQMSCNPAIGGIGKGHLVKEIDALGGAMAIATDYAGIQFRTLNSSKGPAVRATRAQADRALYRQKIQNILQNQPNLRIFQQAVDDLIVENHQVVGVVTQMGLAFESPAVVLTTGTFLSGKIHIGLENYSGGRAGDPPAIALANRLRELPIRVGRLKTGTPPRIDANTIDFSQMTEQKGDSPLPVMSFMGDVSHHPKQISCWITHTNEKTHEIIRGGLDRSPMYSGVIEGIGPRYCPSIEDKIHRFADKSSHQIFIEPEGLNTNEIYPNGISTSLPFDVQLNLVRSIKGMENAEIMRPGYAIEYDYFDPRDLKNSLETKAINGLFFAGQINGTTGYEEAGAQGLLAGMNASLQVQGKEAWCPRRDEAYLGVLVDDLSTLGTKEPYRMFTSRAEYRLLLREDNADIRLTAKGRELGLVDDARWAAFSEKLESIELELQRLRGQWVHPNSPLIHALNPHLNTPISREASFEELLRRPEMDYSKLMQIEGFGPGLEDPQAAEQVQIQVKYSGYIQRQQEEINKAVRNENTGLPLTLDYKEVPGLSNEVIAKLNNHKPETIGQASRISGITPAAISILLVHLKKRGLLRKSA.

13–18 (GGGHAG) provides a ligand contact to FAD. 273–287 (GPRYCPSIEDKIHRF) provides a ligand contact to NAD(+).

The protein belongs to the MnmG family. As to quaternary structure, homodimer. Heterotetramer of two MnmE and two MnmG subunits. FAD serves as cofactor.

The protein resides in the cytoplasm. NAD-binding protein involved in the addition of a carboxymethylaminomethyl (cmnm) group at the wobble position (U34) of certain tRNAs, forming tRNA-cmnm(5)s(2)U34. The protein is tRNA uridine 5-carboxymethylaminomethyl modification enzyme MnmG of Shewanella baltica (strain OS155 / ATCC BAA-1091).